Here is a 75-residue protein sequence, read N- to C-terminus: UPF0346 protein LSL_0716 (75 aa).

Belongs to the UPF0346 family.

This Ligilactobacillus salivarius (strain UCC118) (Lactobacillus salivarius) protein is UPF0346 protein LSL_0716.